We begin with the raw amino-acid sequence, 178 residues long: Large ribosomal subunit protein uL6 (178 aa).

This sequence belongs to the universal ribosomal protein uL6 family. Part of the 50S ribosomal subunit.

In terms of biological role, this protein binds to the 23S rRNA, and is important in its secondary structure. It is located near the subunit interface in the base of the L7/L12 stalk, and near the tRNA binding site of the peptidyltransferase center. This Lactococcus lactis subsp. lactis (strain IL1403) (Streptococcus lactis) protein is Large ribosomal subunit protein uL6.